Here is a 134-residue protein sequence, read N- to C-terminus: Gastrin-releasing peptide (134 aa).

A signal peptide spans 1–23 (MRSREVSLVLLALVLCPAPRGSA). Methionine amide is present on Met-50. A propeptide spanning residues 54 to 134 (SVAESPQLRE…QREGGNPQLY (81 aa)) is cleaved from the precursor. The segment at 98–134 (PPRWEPLSIHQPAWDSKDVSNFKDSGSQREGGNPQLY) is disordered. Positions 119 to 134 (FKDSGSQREGGNPQLY) are enriched in polar residues.

Belongs to the bombesin/neuromedin-B/ranatensin family.

Its subcellular location is the secreted. The protein localises to the cytoplasmic vesicle. It is found in the secretory vesicle lumen. The protein resides in the cell projection. It localises to the neuron projection. Its function is as follows. Stimulates the release of gastrin and other gastrointestinal hormones. Contributes to the perception of prurient stimuli and to the transmission of itch signals in the spinal cord that promote scratching behavior. Contributes primarily to nonhistaminergic itch sensation. In one study, shown to act in the amygdala as part of an inhibitory network which inhibits memory specifically related to learned fear. In another study, shown to act on vasoactive intestinal peptide (VIP)-expressing cells in the auditory cortex, most likely via extrasynaptic diffusion from local and long-range sources, to mediate disinhibition of glutamatergic cells via VIP cell-specific GRPR signaling which leads to enhanced auditory fear memories. Contributes to the regulation of food intake. Inhibits voltage-gated sodium channels but enhances voltage-gated potassium channels in hippocampal neurons. Induces sighing by acting directly on the pre-Botzinger complex, a cluster of several thousand neurons in the ventrolateral medulla responsible for inspiration during respiratory activity. Induces an itch response through activation of receptors present on mast cells, triggering mast cell degranulation. This chain is Gastrin-releasing peptide (GRP), found in Ovis aries (Sheep).